The primary structure comprises 128 residues: Large ribosomal subunit protein bL12 (128 aa).

This sequence belongs to the bacterial ribosomal protein bL12 family. Homodimer. Part of the ribosomal stalk of the 50S ribosomal subunit. Forms a multimeric L10(L12)X complex, where L10 forms an elongated spine to which 2 to 4 L12 dimers bind in a sequential fashion. Binds GTP-bound translation factors.

Forms part of the ribosomal stalk which helps the ribosome interact with GTP-bound translation factors. Is thus essential for accurate translation. The polypeptide is Large ribosomal subunit protein bL12 (Desulfosudis oleivorans (strain DSM 6200 / JCM 39069 / Hxd3) (Desulfococcus oleovorans)).